A 190-amino-acid polypeptide reads, in one-letter code: Protein soem-1 (190 aa).

In terms of domain architecture, SH2 spans 96-190; that stretch reads YMEQNMNRVE…LVLKNQLKPV (95 aa).

In terms of assembly, interacts with abl-1. As to expression, expressed in PQR, but not AQR, Q neuroblast descendents.

Functions downstream of migratory protein mig-13 and may play a role in the control of Q neuroblast migration during larval development. In Caenorhabditis elegans, this protein is Protein soem-1.